The following is a 453-amino-acid chain: Ribulose bisphosphate carboxylase large chain (453 aa).

The propeptide occupies 1 to 2 (MS). Position 3 is an N-acetylproline (Pro3). Lys14 is subject to N6,N6,N6-trimethyllysine. Residues Asn123 and Thr173 each coordinate substrate. Lys175 serves as the catalytic Proton acceptor. Lys177 contributes to the substrate binding site. Positions 201, 203, and 204 each coordinate Mg(2+). Lys201 carries the N6-carboxylysine modification. His294 (proton acceptor) is an active-site residue. Residues Arg295, His327, and Ser379 each coordinate substrate.

The protein belongs to the RuBisCO large chain family. Type I subfamily. In terms of assembly, heterohexadecamer of 8 large chains and 8 small chains; disulfide-linked. The disulfide link is formed within the large subunit homodimers. Mg(2+) serves as cofactor. Post-translationally, the disulfide bond which can form in the large chain dimeric partners within the hexadecamer appears to be associated with oxidative stress and protein turnover.

Its subcellular location is the plastid. The protein localises to the chloroplast. It carries out the reaction 2 (2R)-3-phosphoglycerate + 2 H(+) = D-ribulose 1,5-bisphosphate + CO2 + H2O. The enzyme catalyses D-ribulose 1,5-bisphosphate + O2 = 2-phosphoglycolate + (2R)-3-phosphoglycerate + 2 H(+). In terms of biological role, ruBisCO catalyzes two reactions: the carboxylation of D-ribulose 1,5-bisphosphate, the primary event in carbon dioxide fixation, as well as the oxidative fragmentation of the pentose substrate in the photorespiration process. Both reactions occur simultaneously and in competition at the same active site. This is Ribulose bisphosphate carboxylase large chain from Galium aparine (Catchweed bedstraw).